Here is a 608-residue protein sequence, read N- to C-terminus: 1-phosphatidylinositol 4,5-bisphosphate phosphodiesterase zeta-1 (608 aa).

The 36-residue stretch at 35-70 (CSYIHVKQIFKDNDRLKQGRITIEEFRAIYRIITHR) folds into the EF-hand domain. In terms of domain architecture, PI-PLC X-box spans 155–299 (QDMTHPLNDY…LKFKILVKNK (145 aa)). Active-site residues include His170 and His215. The segment at 305–324 (KETHERKGSDKRGDNQDKET) is disordered. The PI-PLC Y-box domain maps to 349–465 (LSDLVIYTKA…GYILKPHFLR (117 aa)). The C2 domain maps to 465-589 (RESKSYFNPS…KGYRRIPLFS (125 aa)).

Interacts via its C2 domain with PtdIns(3)P and, to a lesser extent, PtdIns(5)P in vitro. Requires Ca(2+) as cofactor. In terms of tissue distribution, expressed specifically in testis and sperm. Weakly expressed in pancreatic-duct cells. Up-regulated in pancreatic-duct cells from patients with cystic fibrosis.

Its subcellular location is the nucleus. It localises to the cytoplasm. It is found in the perinuclear region. It catalyses the reaction a 1,2-diacyl-sn-glycero-3-phospho-(1D-myo-inositol-4,5-bisphosphate) + H2O = 1D-myo-inositol 1,4,5-trisphosphate + a 1,2-diacyl-sn-glycerol + H(+). Functionally, the production of the second messenger molecules diacylglycerol (DAG) and inositol 1,4,5-trisphosphate (IP3) is mediated by activated phosphatidylinositol-specific phospholipase C enzymes. In vitro, hydrolyzes PtdIns(4,5)P2 in a Ca(2+)-dependent manner. Triggers intracellular Ca(2+) oscillations in oocytes solely during M phase and is involved in inducing oocyte activation and initiating embryonic development up to the blastocyst stage. Is therefore a strong candidate for the egg-activating soluble sperm factor that is transferred from the sperm into the egg cytoplasm following gamete membrane fusion. May exert an inhibitory effect on phospholipase-C-coupled processes that depend on calcium ions and protein kinase C, including CFTR trafficking and function. The polypeptide is 1-phosphatidylinositol 4,5-bisphosphate phosphodiesterase zeta-1 (Homo sapiens (Human)).